A 510-amino-acid chain; its full sequence is 2,3-bisphosphoglycerate-independent phosphoglycerate mutase (510 aa).

Mn(2+) contacts are provided by D12 and S62. S62 (phosphoserine intermediate) is an active-site residue. Substrate-binding positions include H123, 153-154, R185, R191, 260-263, and K335; these read RD and RPDR. The Mn(2+) site is built by D402, H406, D443, H444, and H461.

Belongs to the BPG-independent phosphoglycerate mutase family. As to quaternary structure, monomer. The cofactor is Mn(2+).

It carries out the reaction (2R)-2-phosphoglycerate = (2R)-3-phosphoglycerate. Its pathway is carbohydrate degradation; glycolysis; pyruvate from D-glyceraldehyde 3-phosphate: step 3/5. Functionally, catalyzes the interconversion of 2-phosphoglycerate and 3-phosphoglycerate. The polypeptide is 2,3-bisphosphoglycerate-independent phosphoglycerate mutase (Listeria innocua serovar 6a (strain ATCC BAA-680 / CLIP 11262)).